The following is a 586-amino-acid chain: Homothallic switching endonuclease (586 aa).

The region spanning 215–370 is the DOD-type homing endonuclease domain; it reads MLGLWLGDST…IVHISRSLGM (156 aa).

Rapidly degraded via the ubiquitin-26S proteasome system through two ubiquitin-conjugating enzymes UBC2/RAD6 and UBC3/CDC34.

The protein localises to the nucleus. Initiation of mating type interconversion. This protein is a site-specific endonuclease that cleaves a site in the mat locus on chromosome III. The double-strand break is followed by a unidirectional gene conversion event that replaces the information at the mat locus by information copied from either of the two homologous loci (HMR and HML) that reside at the extremity of the chromosome III. Endonuclease expression takes place in late G1 just before cells enter S phase. The protein is Homothallic switching endonuclease (HO) of Saccharomyces cerevisiae (strain ATCC 204508 / S288c) (Baker's yeast).